A 337-amino-acid chain; its full sequence is DNA-directed RNA polymerase subunit alpha (337 aa).

Residues 1-232 form an alpha N-terminal domain (alpha-NTD) region; it reads MVREEVRVCT…IDLFIPFLHA (232 aa). The tract at residues 266–337 is alpha C-terminal domain (alpha-CTD); that stretch reads EISFQCIFID…FAIDLPKNKF (72 aa).

This sequence belongs to the RNA polymerase alpha chain family. In plastids the minimal PEP RNA polymerase catalytic core is composed of four subunits: alpha, beta, beta', and beta''. When a (nuclear-encoded) sigma factor is associated with the core the holoenzyme is formed, which can initiate transcription.

The protein resides in the plastid. It localises to the chloroplast. The enzyme catalyses RNA(n) + a ribonucleoside 5'-triphosphate = RNA(n+1) + diphosphate. Its function is as follows. DNA-dependent RNA polymerase catalyzes the transcription of DNA into RNA using the four ribonucleoside triphosphates as substrates. In Buxus microphylla (Littleleaf boxwood), this protein is DNA-directed RNA polymerase subunit alpha.